We begin with the raw amino-acid sequence, 348 residues long: Putative transport protein HP_0567 (348 aa).

Transmembrane regions (helical) follow at residues 6–26, 27–47, 56–76, 143–163, 194–214, 224–244, 266–286, and 300–320; these read FFWI…QDFL, MDAL…VFLD, SFLC…FIVY, LKLI…FYYG, IVLL…GVMI, LGIL…LIWI, SILL…IVFI, and MLIF…GIIV.

It belongs to the autoinducer-2 exporter (AI-2E) (TC 2.A.86) family.

It is found in the cell membrane. This is Putative transport protein HP_0567 from Helicobacter pylori (strain ATCC 700392 / 26695) (Campylobacter pylori).